We begin with the raw amino-acid sequence, 237 residues long: Mitochondrial carrier-like protein L276 (237 aa).

Solcar repeat units lie at residues 1–83, 85–161, and 164–233; these read MAKY…FENK, YPYT…LNEY, and KPVV…LNKK. Helical transmembrane passes span 11 to 27, 60 to 76, 91 to 108, 140 to 160, and 166 to 183; these read AIATIVAEIITLPICTF, VPAIMSQTYSTSSKYFL, MINGIISGIMTSLITHPI, SFGKTVISSSMFFPLYETLNE, and VVSSMLTAIISTTIMQPL. The Substrate recognition signature appears at 191 to 196; that stretch reads IYGLSL. The helical transmembrane segment at 205 to 226 threads the bilayer; it reads YYRGLSLNLMRIVPHFVITMTT.

The protein belongs to the mitochondrial carrier (TC 2.A.29) family.

It localises to the host mitochondrion inner membrane. In terms of biological role, transports dATP and to a lesser extent dTTP, TTP, UTP and ADP, possibly across the mitochondrial inner membrane. In Acanthamoeba polyphaga (Amoeba), this protein is Mitochondrial carrier-like protein L276.